The following is a 473-amino-acid chain: Photosystem II CP43 reaction center protein (473 aa).

The propeptide occupies 1–14; the sequence is MKTLYSLRRFYPVE. An N-acetylthreonine modification is found at Thr-15. Thr-15 bears the Phosphothreonine mark. The next 5 helical transmembrane spans lie at 69-93, 134-155, 178-200, 255-275, and 291-312; these read LFEVAHFVPEKPMYEQGLILLPHLA, LIGPETLEESFPFFGYVWKDRN, KALYFGGIYDTWAPGGGDVRKIT, KPFAWARRAFVWSGEAYLSYS, and WFNNTAYPSEFYGPTGPEASQA. Glu-367 contacts [CaMn4O5] cluster. The chain crosses the membrane as a helical span at residues 447–471; the sequence is RARAAAAGFEKGIDRDFEPVLSMTP.

It belongs to the PsbB/PsbC family. PsbC subfamily. As to quaternary structure, PSII is composed of 1 copy each of membrane proteins PsbA, PsbB, PsbC, PsbD, PsbE, PsbF, PsbH, PsbI, PsbJ, PsbK, PsbL, PsbM, PsbT, PsbX, PsbY, PsbZ, Psb30/Ycf12, at least 3 peripheral proteins of the oxygen-evolving complex and a large number of cofactors. It forms dimeric complexes. Requires Binds multiple chlorophylls and provides some of the ligands for the Ca-4Mn-5O cluster of the oxygen-evolving complex. It may also provide a ligand for a Cl- that is required for oxygen evolution. PSII binds additional chlorophylls, carotenoids and specific lipids. as cofactor.

The protein localises to the plastid. Its subcellular location is the chloroplast thylakoid membrane. Its function is as follows. One of the components of the core complex of photosystem II (PSII). It binds chlorophyll and helps catalyze the primary light-induced photochemical processes of PSII. PSII is a light-driven water:plastoquinone oxidoreductase, using light energy to abstract electrons from H(2)O, generating O(2) and a proton gradient subsequently used for ATP formation. The protein is Photosystem II CP43 reaction center protein of Cryptomeria japonica (Japanese cedar).